A 93-amino-acid chain; its full sequence is Large ribosomal subunit protein uL23cz/uL23cy (93 aa).

This sequence belongs to the universal ribosomal protein uL23 family. As to quaternary structure, part of the 50S ribosomal subunit.

The protein resides in the plastid. It is found in the chloroplast. In terms of biological role, binds to 23S rRNA. The chain is Large ribosomal subunit protein uL23cz/uL23cy (rpl23-A) from Lotus japonicus (Lotus corniculatus var. japonicus).